Here is a 361-residue protein sequence, read N- to C-terminus: Peptide chain release factor 1 (361 aa).

Q235 bears the N5-methylglutamine mark.

It belongs to the prokaryotic/mitochondrial release factor family. Methylated by PrmC. Methylation increases the termination efficiency of RF1.

It localises to the cytoplasm. In terms of biological role, peptide chain release factor 1 directs the termination of translation in response to the peptide chain termination codons UAG and UAA. This chain is Peptide chain release factor 1, found in Azoarcus sp. (strain BH72).